The sequence spans 308 residues: UPF0282 protein M164_2122 (308 aa).

This sequence belongs to the UPF0282 family.

The chain is UPF0282 protein M164_2122 from Saccharolobus islandicus (strain M.16.4 / Kamchatka #3) (Sulfolobus islandicus).